Reading from the N-terminus, the 702-residue chain is Phosphoribosylformylglycinamidine synthase subunit PurL (702 aa).

Histidine 36 is a catalytic residue. Residues tyrosine 39 and lysine 80 each contribute to the ATP site. Position 82 (glutamate 82) interacts with Mg(2+). Residues serine 83–histidine 86 and arginine 105 each bind substrate. The active-site Proton acceptor is histidine 84. Aspartate 106 contributes to the Mg(2+) binding site. Glutamine 225 provides a ligand contact to substrate. Mg(2+) is bound at residue aspartate 251. A substrate-binding site is contributed by glutamate 293–glutamine 295. ATP contacts are provided by aspartate 468 and glycine 505. Serine 508 provides a ligand contact to substrate.

Belongs to the FGAMS family. Monomer. Part of the FGAM synthase complex composed of 1 PurL, 1 PurQ and 2 PurS subunits.

Its subcellular location is the cytoplasm. The catalysed reaction is N(2)-formyl-N(1)-(5-phospho-beta-D-ribosyl)glycinamide + L-glutamine + ATP + H2O = 2-formamido-N(1)-(5-O-phospho-beta-D-ribosyl)acetamidine + L-glutamate + ADP + phosphate + H(+). The protein operates within purine metabolism; IMP biosynthesis via de novo pathway; 5-amino-1-(5-phospho-D-ribosyl)imidazole from N(2)-formyl-N(1)-(5-phospho-D-ribosyl)glycinamide: step 1/2. Its function is as follows. Part of the phosphoribosylformylglycinamidine synthase complex involved in the purines biosynthetic pathway. Catalyzes the ATP-dependent conversion of formylglycinamide ribonucleotide (FGAR) and glutamine to yield formylglycinamidine ribonucleotide (FGAM) and glutamate. The FGAM synthase complex is composed of three subunits. PurQ produces an ammonia molecule by converting glutamine to glutamate. PurL transfers the ammonia molecule to FGAR to form FGAM in an ATP-dependent manner. PurS interacts with PurQ and PurL and is thought to assist in the transfer of the ammonia molecule from PurQ to PurL. The sequence is that of Phosphoribosylformylglycinamidine synthase subunit PurL from Metallosphaera sedula (strain ATCC 51363 / DSM 5348 / JCM 9185 / NBRC 15509 / TH2).